The primary structure comprises 527 residues: GMP synthase [glutamine-hydrolyzing] (527 aa).

Positions 4–202 constitute a Glutamine amidotransferase type-1 domain; the sequence is KILILDFGSQ…VLQICGARAD (199 aa). Cysteine 81 (nucleophile) is an active-site residue. Catalysis depends on residues histidine 176 and glutamate 178. Residues 203-395 enclose the GMPS ATP-PPase domain; sequence WEMGNYIDEA…LGLPPAMVYR (193 aa). 230–236 lines the ATP pocket; that stretch reads SGGVDSS.

In terms of assembly, homodimer.

The enzyme catalyses XMP + L-glutamine + ATP + H2O = GMP + L-glutamate + AMP + diphosphate + 2 H(+). It functions in the pathway purine metabolism; GMP biosynthesis; GMP from XMP (L-Gln route): step 1/1. Its function is as follows. Catalyzes the synthesis of GMP from XMP. In Paraburkholderia phytofirmans (strain DSM 17436 / LMG 22146 / PsJN) (Burkholderia phytofirmans), this protein is GMP synthase [glutamine-hydrolyzing].